Reading from the N-terminus, the 272-residue chain is 2-dehydro-3-deoxyphosphooctonate aldolase (272 aa).

It belongs to the KdsA family.

It localises to the cytoplasm. The catalysed reaction is D-arabinose 5-phosphate + phosphoenolpyruvate + H2O = 3-deoxy-alpha-D-manno-2-octulosonate-8-phosphate + phosphate. The protein operates within carbohydrate biosynthesis; 3-deoxy-D-manno-octulosonate biosynthesis; 3-deoxy-D-manno-octulosonate from D-ribulose 5-phosphate: step 2/3. It participates in bacterial outer membrane biogenesis; lipopolysaccharide biosynthesis. This chain is 2-dehydro-3-deoxyphosphooctonate aldolase, found in Geotalea uraniireducens (strain Rf4) (Geobacter uraniireducens).